Here is a 705-residue protein sequence, read N- to C-terminus: Polyribonucleotide nucleotidyltransferase (705 aa).

2 residues coordinate Mg(2+): Asp-485 and Asp-491. Positions 552–611 (PKVFTMSINPSKIKDVIGAGGKTINKIIDETGVKIDIKEDGSVFVTAEDYESGKKALAMI) constitute a KH domain. The 69-residue stretch at 621–689 (GEVYLGKVTK…SMGRVNLSRK (69 aa)) folds into the S1 motif domain.

The protein belongs to the polyribonucleotide nucleotidyltransferase family. Mg(2+) serves as cofactor.

It is found in the cytoplasm. The enzyme catalyses RNA(n+1) + phosphate = RNA(n) + a ribonucleoside 5'-diphosphate. Involved in mRNA degradation. Catalyzes the phosphorolysis of single-stranded polyribonucleotides processively in the 3'- to 5'-direction. The chain is Polyribonucleotide nucleotidyltransferase from Clostridium novyi (strain NT).